The sequence spans 25 residues: Small ribosomal subunit protein eS32 (25 aa).

Positions methionine 1–lysine 25 are disordered.

Belongs to the eukaryotic ribosomal protein eS32 family. Component of the small ribosomal subunit. Mature ribosomes consist of a small (40S) and a large (60S) subunit. The 40S subunit contains about 32 different proteins and 1 molecule of RNA (18S). The 60S subunit contains 45 different proteins and 3 molecules of RNA (25S, 5.8S and 5S).

It localises to the cytoplasm. Its function is as follows. Component of the ribosome, a large ribonucleoprotein complex responsible for the synthesis of proteins in the cell. The small ribosomal subunit (SSU) binds messenger RNAs (mRNAs) and translates the encoded message by selecting cognate aminoacyl-transfer RNA (tRNA) molecules. The large subunit (LSU) contains the ribosomal catalytic site termed the peptidyl transferase center (PTC), which catalyzes the formation of peptide bonds, thereby polymerizing the amino acids delivered by tRNAs into a polypeptide chain. The nascent polypeptides leave the ribosome through a tunnel in the LSU and interact with protein factors that function in enzymatic processing, targeting, and the membrane insertion of nascent chains at the exit of the ribosomal tunnel. In Candida albicans (strain SC5314 / ATCC MYA-2876) (Yeast), this protein is Small ribosomal subunit protein eS32.